The chain runs to 63 residues: uncharacterized protein (63 aa).

Its subcellular location is the mitochondrion. This is an uncharacterized protein from Marchantia polymorpha (Common liverwort).